A 98-amino-acid chain; its full sequence is NADH-ubiquinone oxidoreductase chain 4L (98 aa).

A run of 3 helical transmembrane segments spans residues 1 to 21, 29 to 49, and 61 to 81; these read MSLTYMNMFLAFTISLVGLLM, ALLCLEGMMLSLFVMMTITIL, and IILLVFAACEAALGLSLLVMV.

This sequence belongs to the complex I subunit 4L family. As to quaternary structure, core subunit of respiratory chain NADH dehydrogenase (Complex I) which is composed of 45 different subunits.

It localises to the mitochondrion inner membrane. It catalyses the reaction a ubiquinone + NADH + 5 H(+)(in) = a ubiquinol + NAD(+) + 4 H(+)(out). Core subunit of the mitochondrial membrane respiratory chain NADH dehydrogenase (Complex I) which catalyzes electron transfer from NADH through the respiratory chain, using ubiquinone as an electron acceptor. Part of the enzyme membrane arm which is embedded in the lipid bilayer and involved in proton translocation. The polypeptide is NADH-ubiquinone oxidoreductase chain 4L (MT-ND4L) (Rhinophylla pumilio (Dwarf little fruit bat)).